A 59-amino-acid chain; its full sequence is UPF0434 protein VIBHAR_01537 (59 aa).

This sequence belongs to the UPF0434 family.

The chain is UPF0434 protein VIBHAR_01537 from Vibrio campbellii (strain ATCC BAA-1116).